The sequence spans 42 residues: MCIFFFFKKLFFVEINVCLSFFFLFYFIFVLFFAAEVRNNDF.

Residues 15 to 35 (INVCLSFFFLFYFIFVLFFAA) traverse the membrane as a helical segment.

It is found in the membrane. This is an uncharacterized protein from Dictyostelium discoideum (Social amoeba).